We begin with the raw amino-acid sequence, 87 residues long: Small ribosomal subunit protein bS16 (87 aa).

This sequence belongs to the bacterial ribosomal protein bS16 family.

The polypeptide is Small ribosomal subunit protein bS16 (Ehrlichia ruminantium (strain Gardel)).